The sequence spans 379 residues: Chaperone protein DnaJ (379 aa).

The J domain occupies E5 to G69. The segment at G135–T217 adopts a CR-type zinc-finger fold. The Zn(2+) site is built by C148, C151, C165, C168, C191, C194, C205, and C208. CXXCXGXG motif repeat units lie at residues C148–G155, C165–G172, C191–G198, and C205–G212.

This sequence belongs to the DnaJ family. Homodimer. It depends on Zn(2+) as a cofactor.

Its subcellular location is the cytoplasm. Participates actively in the response to hyperosmotic and heat shock by preventing the aggregation of stress-denatured proteins and by disaggregating proteins, also in an autonomous, DnaK-independent fashion. Unfolded proteins bind initially to DnaJ; upon interaction with the DnaJ-bound protein, DnaK hydrolyzes its bound ATP, resulting in the formation of a stable complex. GrpE releases ADP from DnaK; ATP binding to DnaK triggers the release of the substrate protein, thus completing the reaction cycle. Several rounds of ATP-dependent interactions between DnaJ, DnaK and GrpE are required for fully efficient folding. Also involved, together with DnaK and GrpE, in the DNA replication of plasmids through activation of initiation proteins. In Streptococcus agalactiae serotype V (strain ATCC BAA-611 / 2603 V/R), this protein is Chaperone protein DnaJ.